The primary structure comprises 257 residues: NAD-capped RNA hydrolase NudC (257 aa).

Residues Lys25 and Arg69 each coordinate substrate. Zn(2+)-binding residues include Cys98 and Cys101. Glu111 is a substrate binding site. 2 residues coordinate Zn(2+): Cys116 and Cys119. Substrate is bound at residue Tyr124. The 124-residue stretch at 125-248 folds into the Nudix hydrolase domain; that stretch reads PQIAPCIIVA…TVARRLIEDT (124 aa). A divalent metal cation is bound by residues Ala158, Glu174, and Glu178. Positions 159 to 180 match the Nudix box motif; it reads GFVEVGETLEQAVAREVMEESG. A substrate-binding site is contributed by 192 to 199; the sequence is QPWPFPQS. Residue Glu219 participates in a divalent metal cation binding. Ala241 contacts substrate.

It belongs to the Nudix hydrolase family. NudC subfamily. In terms of assembly, homodimer. Mg(2+) serves as cofactor. Mn(2+) is required as a cofactor. Requires Zn(2+) as cofactor.

It carries out the reaction a 5'-end NAD(+)-phospho-ribonucleoside in mRNA + H2O = a 5'-end phospho-adenosine-phospho-ribonucleoside in mRNA + beta-nicotinamide D-ribonucleotide + 2 H(+). It catalyses the reaction NAD(+) + H2O = beta-nicotinamide D-ribonucleotide + AMP + 2 H(+). The catalysed reaction is NADH + H2O = reduced beta-nicotinamide D-ribonucleotide + AMP + 2 H(+). Functionally, mRNA decapping enzyme that specifically removes the nicotinamide adenine dinucleotide (NAD) cap from a subset of mRNAs by hydrolyzing the diphosphate linkage to produce nicotinamide mononucleotide (NMN) and 5' monophosphate mRNA. The NAD-cap is present at the 5'-end of some mRNAs and stabilizes RNA against 5'-processing. Has preference for mRNAs with a 5'-end purine. Catalyzes the hydrolysis of a broad range of dinucleotide pyrophosphates. This is NAD-capped RNA hydrolase NudC from Escherichia fergusonii (strain ATCC 35469 / DSM 13698 / CCUG 18766 / IAM 14443 / JCM 21226 / LMG 7866 / NBRC 102419 / NCTC 12128 / CDC 0568-73).